Here is a 439-residue protein sequence, read N- to C-terminus: Ribosomal protein uS12 methylthiotransferase RimO (439 aa).

The MTTase N-terminal domain occupies 2–114 (SKLYLMSLGC…VDEMILKKTN (113 aa)). [4Fe-4S] cluster is bound by residues C11, C45, C77, C146, C150, and C153. One can recognise a Radical SAM core domain in the interval 132 to 363 (TGSNSHAFIK…VNEVIEKSFE (232 aa)).

This sequence belongs to the methylthiotransferase family. RimO subfamily. The cofactor is [4Fe-4S] cluster.

It is found in the cytoplasm. It catalyses the reaction L-aspartate(89)-[ribosomal protein uS12]-hydrogen + (sulfur carrier)-SH + AH2 + 2 S-adenosyl-L-methionine = 3-methylsulfanyl-L-aspartate(89)-[ribosomal protein uS12]-hydrogen + (sulfur carrier)-H + 5'-deoxyadenosine + L-methionine + A + S-adenosyl-L-homocysteine + 2 H(+). Its function is as follows. Catalyzes the methylthiolation of an aspartic acid residue of ribosomal protein uS12. This is Ribosomal protein uS12 methylthiotransferase RimO from Campylobacter jejuni (strain RM1221).